Here is a 381-residue protein sequence, read N- to C-terminus: Genome polyprotein (381 aa).

Residues 115-155 (ANDTIDTGGNSKKDVKPEQGSIQPSSNKGKEKDVNAGTSGT) are disordered.

It belongs to the potyviridae genome polyprotein family. In terms of processing, genome polyprotein of potyviruses undergoes post-translational proteolytic processing by the main proteinase NIa-pro resulting in the production of at least ten individual proteins. The P1 proteinase and the HC-pro cleave only their respective C-termini autocatalytically. 6K1 is essential for proper proteolytic separation of P3 from CI.

The protein resides in the virion. The enzyme catalyses RNA(n) + a ribonucleoside 5'-triphosphate = RNA(n+1) + diphosphate. In terms of biological role, an RNA-dependent RNA polymerase that plays an essential role in the virus replication. Its function is as follows. Involved in aphid transmission, cell-to-cell and systemis movement, encapsidation of the viral RNA and in the regulation of viral RNA amplification. This Capsicum annuum (Capsicum pepper) protein is Genome polyprotein.